Reading from the N-terminus, the 1174-residue chain is MSSNNDLWLHLVSQLNTQQRAAALFDYTRGLQVIAGPGTGKTKVLTSRVAYLILHHHIHPRDIIVTTFTNKAANEMKERLQEMLRGAGVNISELLIGTFHSICLKILYRFGHLVDLQKDWRIIDEKEIDVILDDMIEKVPDQIRDYASSITRKVNLCMPSKNGDEWTIHPKLIKKQISKLKSNAILPEEYILDSNHDAALGYFYQIYQSELSKKNTLDFDDLLMYTFRLLTRVRVLSNIKHVLVDEFQDTNGIQLDLMFLFAKGNHHLSRGMTIVGDPDQSIYAFRNALAHNFLEMGRKCPIEYSTIILVENYRSSQKILNTSEILITQQNKGRQNRAPLRAQFDLDFPPVYMNFPAYFLEAPSLVRELLYLKALPNLFTFNDFAILVRQRRQIKRIESALIEHRIPYKIIRGHSFWDSKETRAMLNLLKLIFSPNDKHAILASLLYPARGLGPATGEKIKNALDTLATDVSCFQILKDISSKKIMLDIPTKGRSVIADFISMIENCQLLLQSTLLGGLSDLFDKLYELSGLKYEYLYKDGKKKNDQLEKSEPNLLNARHKNIELLKNYFLALLSKSESSDKEKNEAIKAATDEAEPIENKVITPKEYLRNFFNSLSLHSDAAEEEESESNKDAKIKREKNGFVTISTIHGAKGLEWPVVFIPGCEEGIIPCVFNDDKKDESEEDEEEDQENSKKDASPKKTRVLSVEDSIDEERRMFFVAQTRAKYLLYLSNTVTVEDVDRPRIASRFLTTDLIKAMSDSQKLFESTNSIKKLYRILNKKPPAEDDKLFSLDQLRKDYNQFIENRRERMIWQGIQMNDVYGIQLSRNKLLGSVSDFTSAADQLRLETQNSIFPQKKLIEKSRPSKINGNYAPKSRVKSPEKRYAPETTSFHSPTKKKVYAPQYVSTTNVPSRQEFHSSTGKNIPFLRREDRSITDISPRSSTRSLKGASPNKTSHMSDDLMRPSPTRKDKVTRNIHFATAGTFRIETQSNVDELHPPEYSNKSGQSLTSSEFSGFSSACSNSDQPTNLIEDINNELDLSDEELLNDISIERRRELLGSKKTKKIKPKTRNRKSKRGDKVKVEEVIDLKSEFEEDDSRNTTAAELLHNPDDTTVDNRPIISNAKFLADAAMKKTQKFSKKVKNEPASSQMDIFSQLSRAKKKSKLNNGEIIVID.

In terms of domain architecture, UvrD-like helicase ATP-binding spans Gln-14 to Ser-316. Position 38–43 (Gly-38–Lys-43) interacts with ATP. Positions Leu-222–Leu-243 are leucine-zipper. Residue Arg-314 participates in ATP binding. One can recognise a UvrD-like helicase C-terminal domain in the interval Gln-317–Gly-654. The tract at residues Asp-676–Val-704 is disordered. Residue Ser-833 is modified to Phosphoserine. 3 disordered regions span residues Ser-865 to Lys-896, Asn-909 to Thr-973, and Glu-994 to Asp-1024. Composition is skewed to polar residues over residues Asn-909–Lys-922 and Thr-935–Ser-955. Positions His-956–Thr-973 are enriched in basic and acidic residues. Over residues Ser-1007–Ser-1023 the composition is skewed to low complexity.

The protein belongs to the helicase family. UvrD subfamily.

Its subcellular location is the nucleus. The catalysed reaction is Couples ATP hydrolysis with the unwinding of duplex DNA by translocating in the 3'-5' direction.. It carries out the reaction ATP + H2O = ADP + phosphate + H(+). Functionally, ATP-dependent DNA helicase involved in DNA repair at least for UV-induced lesions. The polarity of the helicase activity was determined to be 3' to 5'. The chain is ATP-dependent DNA helicase SRS2 (SRS2) from Saccharomyces cerevisiae (strain ATCC 204508 / S288c) (Baker's yeast).